We begin with the raw amino-acid sequence, 79 residues long: Putative membrane protein insertion efficiency factor (79 aa).

Belongs to the UPF0161 family.

The protein resides in the cell inner membrane. Could be involved in insertion of integral membrane proteins into the membrane. The sequence is that of Putative membrane protein insertion efficiency factor from Prochlorococcus marinus (strain SARG / CCMP1375 / SS120).